Here is a 49-residue protein sequence, read N- to C-terminus: MGKRKANHTISGMNVASAQGQGTGYNEEFANEPLTPAERQNNKKRKKNQ.

The disordered stretch occupies residues 1 to 49 (MGKRKANHTISGMNVASAQGQGTGYNEEFANEPLTPAERQNNKKRKKNQ). Over residues 8–20 (HTISGMNVASAQG) the composition is skewed to polar residues.

Belongs to the SspO family.

The protein localises to the spore core. This Bacillus cereus (strain G9842) protein is Small, acid-soluble spore protein O.